The sequence spans 146 residues: Hemoglobin subunit beta (146 aa).

Val1 bears the N-acetylvaline; partial mark. Residues 2–146 (HLTDAEKAAV…VANALAHKYH (145 aa)) enclose the Globin domain. Thr12 is subject to Phosphothreonine. Lys59 is modified (N6-acetyllysine). Residue His63 participates in heme b binding. Residue Lys82 is modified to N6-acetyllysine. A heme b-binding site is contributed by His92. An S-nitrosocysteine modification is found at Cys93. The residue at position 144 (Lys144) is an N6-acetyllysine.

This sequence belongs to the globin family. In terms of assembly, heterotetramer of two alpha chains and two beta chains. Red blood cells.

In terms of biological role, involved in oxygen transport from the lung to the various peripheral tissues. This chain is Hemoglobin subunit beta (HBB), found in Procavia capensis habessinica (Abyssinian hyrax).